Consider the following 211-residue polypeptide: Thymidylate kinase (211 aa).

11–18 is an ATP binding site; the sequence is GPDGAGKT.

It belongs to the thymidylate kinase family.

It carries out the reaction dTMP + ATP = dTDP + ADP. Phosphorylation of dTMP to form dTDP in both de novo and salvage pathways of dTTP synthesis. In Streptococcus pyogenes serotype M49 (strain NZ131), this protein is Thymidylate kinase.